Reading from the N-terminus, the 358-residue chain is Isopentenyl-diphosphate delta-isomerase (358 aa).

Residue 12 to 13 participates in substrate binding; the sequence is RK. Residues 69–71, Ser99, and Asn128 each bind FMN; that span reads AMT. Residue Gln158 coordinates substrate. Glu159 contributes to the Mg(2+) binding site. FMN-binding positions include Lys190, Thr220, 267–269, and 288–289; these read GIR and AG.

It belongs to the IPP isomerase type 2 family. As to quaternary structure, homooctamer. Dimer of tetramers. It depends on FMN as a cofactor. NADPH is required as a cofactor. Requires Mg(2+) as cofactor.

It is found in the cytoplasm. The enzyme catalyses isopentenyl diphosphate = dimethylallyl diphosphate. Its function is as follows. Involved in the biosynthesis of isoprenoids. Catalyzes the 1,3-allylic rearrangement of the homoallylic substrate isopentenyl (IPP) to its allylic isomer, dimethylallyl diphosphate (DMAPP). This chain is Isopentenyl-diphosphate delta-isomerase, found in Listeria monocytogenes serovar 1/2a (strain ATCC BAA-679 / EGD-e).